A 249-amino-acid chain; its full sequence is Gamma-glutamyl peptidase 3 (249 aa).

Positions 19–217 (SEFVKKTYGG…VDRVLNMKLM (199 aa)) constitute a Glutamine amidotransferase type-1 domain. Cys-103 functions as the Nucleophile in the catalytic mechanism. Active-site residues include His-196 and Glu-198.

This sequence belongs to the peptidase C26 family.

Its subcellular location is the cytoplasm. The protein resides in the cytosol. The enzyme catalyses an S-[(1E)-1-(hydroxyimino)-omega-(methylsulfanyl)alkyl]-L-glutathione + H2O = an S-[(1E)-1-(hydroxyimino)-omega-(methylsulfanyl)alkyl]-L-cysteinylglycine + L-glutamate. The catalysed reaction is (E)-1-(glutathione-S-yl)-2-(1H-indol-3-yl)acetohydroximate + H2O = (E)-1-(glycyl-L-cystein-S-yl)-2-(1H-indol-3-yl)acetohydroximate + L-glutamate. It carries out the reaction 2-(glutathion-S-yl)-2-(1H-indol-3-yl)acetonitrile + H2O = 2-(glycyl-L-cystein-S-yl)-2-(1H-indol-3-yl)acetonitrile + L-glutamate. It catalyses the reaction (Z)-1-(glutathione-S-yl)-2-phenylacetohydroximate + H2O = (Z)-1-(glycyl-L-cystein-S-yl)-2-phenylacetohydroximate + L-glutamate. It functions in the pathway secondary metabolite biosynthesis. Functionally, involved in glucosinolate biosynthesis. Hydrolyzes the gamma-glutamyl peptide bond of several glutathione (GSH) conjugates to produce Cys-Gly conjugates related to glucosinolates. The gamma-Glu-Cys-Gly-GSH conjugates are the sulfur-donating molecule in glucosinolate biosynthesis. Can use the GSH conjugate of the camalexin intermediate IAN (GS-IAN) as substrate. Required for the biosynthesis of camalexin, a pathogen-inducible phytoalexin with antibacterial and antifungal properties. In Arabidopsis thaliana (Mouse-ear cress), this protein is Gamma-glutamyl peptidase 3.